We begin with the raw amino-acid sequence, 510 residues long: NADP-dependent fatty aldehyde dehydrogenase (510 aa).

Residue 229–234 (GSVGGG) coordinates NADP(+). Residues Glu-253 and Cys-289 contribute to the active site.

It belongs to the aldehyde dehydrogenase family. As to quaternary structure, homodimer.

It catalyses the reaction an aldehyde + NADP(+) + H2O = a carboxylate + NADPH + 2 H(+). Catalyzes the oxidation of long-chain aliphatic aldehydes to acids. May be implicated in controlling luminescence as it catalyzes the oxidation of the fatty aldehyde substrate for the light-emitting reaction. This is NADP-dependent fatty aldehyde dehydrogenase (aldH) from Vibrio harveyi (Beneckea harveyi).